The sequence spans 486 residues: Ribosomal RNA small subunit methyltransferase F (486 aa).

Residues 124 to 130 (ASAPGSK), glutamate 148, aspartate 175, and aspartate 193 contribute to the S-adenosyl-L-methionine site. Cysteine 246 (nucleophile) is an active-site residue.

Belongs to the class I-like SAM-binding methyltransferase superfamily. RsmB/NOP family.

Its subcellular location is the cytoplasm. The catalysed reaction is cytidine(1407) in 16S rRNA + S-adenosyl-L-methionine = 5-methylcytidine(1407) in 16S rRNA + S-adenosyl-L-homocysteine + H(+). Specifically methylates the cytosine at position 1407 (m5C1407) of 16S rRNA. This chain is Ribosomal RNA small subunit methyltransferase F, found in Shewanella baltica (strain OS223).